We begin with the raw amino-acid sequence, 191 residues long: Protein UL140 (191 aa).

A helical membrane pass occupies residues 28–48; it reads TLVVFGFIVTLLFFLFMLYFW.

The protein localises to the host membrane. The polypeptide is Protein UL140 (UL140) (Homo sapiens (Human)).